Consider the following 275-residue polypeptide: uncharacterized protein (275 aa).

Residues Glu71, Asp85, Ile87, and Asp88 each contribute to the Mg(2+) site. A substrate-binding site is contributed by Glu71. 87–90 (IDGT) contacts substrate. Transmembrane regions (helical) follow at residues 87-107 (IDGT…IAFV), 112-132 (PVLG…SVDG), and 178-198 (IVCL…RLAG). Asp208 lines the Mg(2+) pocket. Asp208 is a substrate binding site.

This sequence belongs to the inositol monophosphatase superfamily.

The protein localises to the cell membrane. This is an uncharacterized protein from Sinorhizobium fredii (strain NBRC 101917 / NGR234).